Consider the following 410-residue polypeptide: Kelch domain-containing protein 10 (410 aa).

Positions 1–40 are disordered; the sequence is MSAAQGWDRNRRRGGGAAGGASGVSGAGAAGGGRGTGQLN. R13 is modified (omega-N-methylarginine). A compositionally biased stretch (gly residues) spans 15–36; sequence GGAAGGASGVSGAGAAGGGRGT. Kelch repeat units follow at residues 87–154, 155–198, 199–260, 261–319, 320–364, and 365–403; these read GPDN…DVHV, CNVK…GYIY, STDL…IHAY, NLET…LQTF, QWVK…GSLF, and KIWL…GLTQ. Residues 369–410 are interaction with CUL2; the sequence is VVPSLLELAWEKLLAAFPNLANLSRTQLLHLGLTQELIERLK.

It belongs to the KLHDC10 family. In terms of assembly, component of a CRL2 E3 ubiquitin-protein ligase complex, also named ECS (Elongin BC-CUL2/5-SOCS-box protein) complex, composed of CUL2, Elongin BC (ELOB and ELOC), RBX1 and substrate-specific adapter KLHDC10. Interacts (via the 6 Kelch repeats) with PPP5C.

It is found in the nucleus. It localises to the cytoplasm. It participates in protein modification; protein ubiquitination. In terms of biological role, substrate-recognition component of a Cul2-RING (CRL2) E3 ubiquitin-protein ligase complex of the DesCEND (destruction via C-end degrons) pathway, which recognizes a C-degron located at the extreme C-terminus of target proteins, leading to their ubiquitination and degradation. The C-degron recognized by the DesCEND pathway is usually a motif of less than ten residues and can be present in full-length proteins, truncated proteins or proteolytically cleaved forms. The CRL2(KLHDC10) complex specifically recognizes proteins with a proline-glycine (Pro-Gly) or an alanine tail (CAT tail) at the C-terminus, leading to their ubiquitination and degradation. The CRL2(KLHDC10) complex is involved in the ribosome-associated quality control (RQC) pathway, which mediates the extraction of incompletely synthesized nascent chains from stalled ribosomes: CRL2(KLHDC10) acts downstream of NEMF and recognizes CAT tails associated with stalled nascent chains, leading to their ubiquitination and degradation. Participates in the oxidative stress-induced cell death through MAP3K5 activation. Inhibits PPP5C phosphatase activity on MAP3K5. Acts as a regulator of necroptosis. This chain is Kelch domain-containing protein 10, found in Rattus norvegicus (Rat).